Here is a 327-residue protein sequence, read N- to C-terminus: Ribonucleoside-diphosphate reductase small chain (327 aa).

Fe cation is bound by residues aspartate 70, glutamate 101, and histidine 104. Tyrosine 108 is an active-site residue. Residues glutamate 164, glutamate 198, and histidine 201 each coordinate Fe cation.

The protein belongs to the ribonucleoside diphosphate reductase small chain family. Heterotetramer composed of a homodimer of the large subunit (R1) and a homodimer of the small subunit (R2). Larger multisubunit protein complex are also active, composed of (R1)n(R2)n. Requires Fe cation as cofactor.

The enzyme catalyses a 2'-deoxyribonucleoside 5'-diphosphate + [thioredoxin]-disulfide + H2O = a ribonucleoside 5'-diphosphate + [thioredoxin]-dithiol. Ribonucleoside-diphosphate reductase holoenzyme provides the precursors necessary for viral DNA synthesis. Allows virus growth in non-dividing cells. Catalyzes the biosynthesis of deoxyribonucleotides from the corresponding ribonucleotides. The protein is Ribonucleoside-diphosphate reductase small chain of Ornithodoros (relapsing fever ticks).